The following is a 196-amino-acid chain: ATP-dependent Clp protease proteolytic subunit (196 aa).

The active-site Nucleophile is the serine 101. Histidine 126 is an active-site residue.

This sequence belongs to the peptidase S14 family. In terms of assembly, component of the chloroplastic Clp protease core complex.

It is found in the plastid. Its subcellular location is the chloroplast stroma. The enzyme catalyses Hydrolysis of proteins to small peptides in the presence of ATP and magnesium. alpha-casein is the usual test substrate. In the absence of ATP, only oligopeptides shorter than five residues are hydrolyzed (such as succinyl-Leu-Tyr-|-NHMec, and Leu-Tyr-Leu-|-Tyr-Trp, in which cleavage of the -Tyr-|-Leu- and -Tyr-|-Trp bonds also occurs).. Functionally, cleaves peptides in various proteins in a process that requires ATP hydrolysis. Has a chymotrypsin-like activity. Plays a major role in the degradation of misfolded proteins. The chain is ATP-dependent Clp protease proteolytic subunit from Helianthus annuus (Common sunflower).